The primary structure comprises 701 residues: F-box/LRR-repeat protein 17 (701 aa).

The span at 1–11 (MGHLLSKEPRN) shows a compositional bias: basic and acidic residues. Disordered regions lie at residues 1–20 (MGHL…RPRC), 72–94 (APAG…YAAA), and 227–300 (GGGG…DADC). Over residues 227-237 (GGGGGPAGGGA) the composition is skewed to gly residues. A compositionally biased stretch (pro residues) spans 252–264 (EQPPQPLCPPPSS). The region spanning 318–365 (TPDINQLPPSILLKIFSNLSLDERCLSASLVCKYWRDLCLDFQFWKQL) is the F-box domain.

This sequence belongs to the FBXL17 family. As to quaternary structure, part of the SCF (SKP1-CUL1-F-box) E3 ubiquitin-protein ligase complex SCF(FBXL17) composed of CUL1, SKP1, RBX1 and FBXL17. Interacts with BTB domain-containing proteins such as KLHL12, BCL6 and BACH1; specifically recognizes and binds a conserved degron of non-consecutive residues present at the interface of BTB dimers of aberrant composition. Interacts with SUFU. Interacts with PRMT1.

It localises to the cytoplasm. Its subcellular location is the nucleus. In terms of biological role, substrate-recognition component of the SCF(FBXL17) E3 ubiquitin ligase complex, a key component of a quality control pathway required to ensure functional dimerization of BTB domain-containing proteins (dimerization quality control, DQC). FBXL17 specifically recognizes and binds a conserved degron of non-consecutive residues present at the interface of BTB dimers of aberrant composition: aberrant BTB dimer are then ubiquitinated by the SCF(FBXL17) complex and degraded by the proteasome. The ability of the SCF(FBXL17) complex to eliminate compromised BTB dimers is required for the differentiation and survival of neural crest and neuronal cells. The SCF(FBXL17) complex mediates ubiquitination and degradation of BACH1. The SCF(FBXL17) complex is also involved in the regulation of the hedgehog/smoothened (Hh) signaling pathway by mediating the ubiquitination and degradation of SUFU, allowing the release of GLI1 from SUFU for proper Hh signal transduction. The SCF(FBXL17) complex mediates ubiquitination and degradation of PRMT1. In Homo sapiens (Human), this protein is F-box/LRR-repeat protein 17.